The following is a 106-amino-acid chain: UPF0060 membrane protein R01043 (106 aa).

Transmembrane regions (helical) follow at residues 5–25, 31–51, 61–81, and 85–105; these read AIYF…WSWL, ALWL…LTMV, AAYG…AEGV, and HWDM…LAGP.

This sequence belongs to the UPF0060 family.

The protein localises to the cell inner membrane. The protein is UPF0060 membrane protein R01043 of Rhizobium meliloti (strain 1021) (Ensifer meliloti).